The sequence spans 333 residues: Phosphate acetyltransferase (333 aa).

Belongs to the phosphate acetyltransferase and butyryltransferase family. As to quaternary structure, homodimer.

The protein localises to the cell membrane. The enzyme catalyses acetyl-CoA + phosphate = acetyl phosphate + CoA. Its pathway is metabolic intermediate biosynthesis; acetyl-CoA biosynthesis; acetyl-CoA from acetate: step 2/2. In Methanosarcina thermophila, this protein is Phosphate acetyltransferase (pta).